The chain runs to 112 residues: MCRCRCMAMMSFVAIVTPLTMLTGLIDWKYRYDMRKVPIIQRKVITGIVGYVFVVVYVVLHSLTDYSLAALAMALVFFAITGEYGGKLVHGARTLLCLKNLRKGSSQKSNPN.

The next 2 helical transmembrane spans lie at 44 to 63 (VITG…LHSL) and 68 to 90 (LAAL…KLVH).

The protein resides in the cell membrane. This is an uncharacterized protein from Archaeoglobus fulgidus (strain ATCC 49558 / DSM 4304 / JCM 9628 / NBRC 100126 / VC-16).